A 171-amino-acid chain; its full sequence is Early E1A protein (171 aa).

The tract at residues 40 to 48 (PTLHDLFDV) is interaction with RB1 in competition with E2F1. Positions 67–96 (DTDSSASTEGDSGFSPLSTPPVSPIPPHPT) are disordered. Residues 84–96 (STPPVSPIPPHPT) are compositionally biased toward pro residues. Positions 106–110 (LLCLE) match the LXCXE motif, interaction with host RB1 motif. A zinc finger spans residues 145 to 163 (CLRCAFYQEQDDNALCGLC). Positions 166-171 (KGPCRR) match the Nuclear localization signal motif.

The protein belongs to the adenoviridae E1A protein family. As to quaternary structure, interacts with host UBE2I; this interaction interferes with polySUMOylation. Interacts with host RB1; this interaction induces the aberrant dissociation of RB1-E2F1 complex thereby disrupting the activity of RB1 and activating E2F1-regulated genes. Interacts with host ATF7; the interaction enhances ATF7-mediated viral transactivation activity which requires the zinc binding domains of both proteins. Isoform early E1A 32 kDa protein and isoform early E1A 26 kDa protein interact (via N-terminus) with CUL1 and E3 ubiquitin ligase RBX1; these interactions inhibit RBX1-CUL1-dependent elongation reaction of ubiquitin chains and attenuate ubiquitination of SCF(FBXW7) target proteins. Interacts (via PXLXP motif) with host ZMYND11/BS69 (via MYND-type zinc finger); this interaction inhibits E1A mediated transactivation. Interacts with host EP300; this interaction stimulates the acetylation of RB1 by recruiting EP300 and RB1 into a multimeric-protein complex. Interacts with host CTBP1 and CTBP2; this interaction seems to potentiate viral replication. Interacts with host DCAF7. Interacts with host DYRK1A. Interacts with host KPNA4; this interaction allows E1A import into the host nucleus. Interacts with host EP400; this interaction stabilizes MYC. Interacts with host TBP protein; this interaction probably disrupts the TBP-TATA complex.

It localises to the host nucleus. Its function is as follows. Plays a role in viral genome replication by driving entry of quiescent cells into the cell cycle. Stimulation of progression from G1 to S phase allows the virus to efficiently use the cellular DNA replicating machinery to achieve viral genome replication. E1A protein has both transforming and trans-activating activities. Induces the disassembly of the E2F1 transcription factor from RB1 by direct competition for the same binding site on RB1, with subsequent transcriptional activation of E2F1-regulated S-phase genes and of the E2 region of the adenoviral genome. Release of E2F1 leads to the ARF-mediated inhibition of MDM2 and causes TP53/p53 to accumulate because it is not targeted for degradation by MDM2-mediated ubiquitination anymore. This increase in TP53, in turn, would arrest the cell proliferation and direct its death but this effect is counteracted by the viral protein E1B-55K. Inactivation of the ability of RB1 to arrest the cell cycle is critical for cellular transformation, uncontrolled cellular growth and proliferation induced by viral infection. Interaction with RBX1 and CUL1 inhibits ubiquitination of the proteins targeted by SCF(FBXW7) ubiquitin ligase complex, and may be linked to unregulated host cell proliferation. The tumorigenesis-restraining activity of E1A may be related to the disruption of the host CtBP-CtIP complex through the CtBP binding motif. The sequence is that of Early E1A protein from Canis lupus familiaris (Dog).